The sequence spans 187 residues: Elongation factor P (187 aa).

The protein belongs to the elongation factor P family.

It localises to the cytoplasm. It functions in the pathway protein biosynthesis; polypeptide chain elongation. Involved in peptide bond synthesis. Stimulates efficient translation and peptide-bond synthesis on native or reconstituted 70S ribosomes in vitro. Probably functions indirectly by altering the affinity of the ribosome for aminoacyl-tRNA, thus increasing their reactivity as acceptors for peptidyl transferase. This chain is Elongation factor P, found in Prochlorococcus marinus (strain NATL2A).